Consider the following 264-residue polypeptide: Thymidylate synthase (264 aa).

Residues arginine 21 and 126-127 (RR) each bind dUMP. The Nucleophile role is filled by cysteine 146. Residues 166 to 169 (RSAD), asparagine 177, and 207 to 209 (HLY) each bind dUMP. Aspartate 169 is a binding site for (6R)-5,10-methylene-5,6,7,8-tetrahydrofolate. Alanine 263 provides a ligand contact to (6R)-5,10-methylene-5,6,7,8-tetrahydrofolate.

Belongs to the thymidylate synthase family. Bacterial-type ThyA subfamily. As to quaternary structure, homodimer.

It localises to the cytoplasm. The catalysed reaction is dUMP + (6R)-5,10-methylene-5,6,7,8-tetrahydrofolate = 7,8-dihydrofolate + dTMP. The protein operates within pyrimidine metabolism; dTTP biosynthesis. Functionally, catalyzes the reductive methylation of 2'-deoxyuridine-5'-monophosphate (dUMP) to 2'-deoxythymidine-5'-monophosphate (dTMP) while utilizing 5,10-methylenetetrahydrofolate (mTHF) as the methyl donor and reductant in the reaction, yielding dihydrofolate (DHF) as a by-product. This enzymatic reaction provides an intracellular de novo source of dTMP, an essential precursor for DNA biosynthesis. The protein is Thymidylate synthase of Nitrobacter hamburgensis (strain DSM 10229 / NCIMB 13809 / X14).